Consider the following 359-residue polypeptide: Histamine H2 receptor (359 aa).

At 1–22 the chain is on the extracellular side; sequence MISNGTGSSFCLDSPPCRITVS. The N-linked (GlcNAc...) asparagine glycan is linked to Asn4. A helical transmembrane segment spans residues 23 to 44; it reads VVLTVLILITIAGNVVVCLAVG. At 45-57 the chain is on the cytoplasmic side; it reads LNRRLRSLTNCFI. A helical membrane pass occupies residues 58–81; it reads VSLAITDLLLGLLVLPFSAFYQLS. The Extracellular segment spans residues 82-92; sequence CRWSFGKVFCN. A disulfide bridge connects residues Cys91 and Cys174. Residues 93–114 traverse the membrane as a helical segment; the sequence is IYTSLDVMLCTASILNLFMISL. Over 115–134 the chain is Cytoplasmic; that stretch reads DRYCAVTDPLRYPVLITPVR. A helical transmembrane segment spans residues 135–159; it reads VAVSLVLIWVISITLSFLSIHLGWN. Residues 160–180 are Extracellular-facing; it reads SRNETSSFNHTIPKCKVQVNL. Residues 181–204 form a helical membrane-spanning segment; that stretch reads VYGLVDGLVTFYLPLLVMCITYYR. Residues 205–234 are Cytoplasmic-facing; the sequence is IFKIARDQAKRIHHMGSWKAATIGEHKATV. The chain crosses the membrane as a helical span at residues 235–258; sequence TLAAVMGAFIICWFPYFTVFVYRG. Over 259 to 267 the chain is Extracellular; it reads LKGDDAINE. Residues 268–289 traverse the membrane as a helical segment; sequence AFEAVVLWLGYANSALNPILYA. Residues 290 to 359 are Cytoplasmic-facing; sequence TLNRDFRTAY…VTAPRGATDR (70 aa). A lipid anchor (S-palmitoyl cysteine) is attached at Cys305. Positions 310-327 are enriched in polar residues; sequence HNAQETSLRSNSSQLARN. Positions 310-359 are disordered; it reads HNAQETSLRSNSSQLARNQSREPMRQEEKPLKLQVWSGTEVTAPRGATDR. Residues 328-340 are compositionally biased toward basic and acidic residues; that stretch reads QSREPMRQEEKPL.

The protein belongs to the G-protein coupled receptor 1 family. Gastric fundus and, to a lesser extent, in brain.

The protein resides in the cell membrane. In terms of biological role, the H2 subclass of histamine receptors mediates gastric acid secretion. The activity of this receptor is mediated by G proteins which activate adenylyl cyclase. In Canis lupus familiaris (Dog), this protein is Histamine H2 receptor (HRH2).